The following is a 295-amino-acid chain: Phosphatidylserine decarboxylase proenzyme (295 aa).

Catalysis depends on charge relay system; for autoendoproteolytic cleavage activity residues Asp101, His158, and Ser262. Ser262 (schiff-base intermediate with substrate; via pyruvic acid; for decarboxylase activity) is an active-site residue. At Ser262 the chain carries Pyruvic acid (Ser); by autocatalysis.

It belongs to the phosphatidylserine decarboxylase family. PSD-B subfamily. Prokaryotic type I sub-subfamily. Heterodimer of a large membrane-associated beta subunit and a small pyruvoyl-containing alpha subunit. Pyruvate serves as cofactor. Is synthesized initially as an inactive proenzyme. Formation of the active enzyme involves a self-maturation process in which the active site pyruvoyl group is generated from an internal serine residue via an autocatalytic post-translational modification. Two non-identical subunits are generated from the proenzyme in this reaction, and the pyruvate is formed at the N-terminus of the alpha chain, which is derived from the carboxyl end of the proenzyme. The autoendoproteolytic cleavage occurs by a canonical serine protease mechanism, in which the side chain hydroxyl group of the serine supplies its oxygen atom to form the C-terminus of the beta chain, while the remainder of the serine residue undergoes an oxidative deamination to produce ammonia and the pyruvoyl prosthetic group on the alpha chain. During this reaction, the Ser that is part of the protease active site of the proenzyme becomes the pyruvoyl prosthetic group, which constitutes an essential element of the active site of the mature decarboxylase.

It localises to the cell membrane. The catalysed reaction is a 1,2-diacyl-sn-glycero-3-phospho-L-serine + H(+) = a 1,2-diacyl-sn-glycero-3-phosphoethanolamine + CO2. Its pathway is phospholipid metabolism; phosphatidylethanolamine biosynthesis; phosphatidylethanolamine from CDP-diacylglycerol: step 2/2. Functionally, catalyzes the formation of phosphatidylethanolamine (PtdEtn) from phosphatidylserine (PtdSer). The polypeptide is Phosphatidylserine decarboxylase proenzyme (Pasteurella multocida (strain Pm70)).